The chain runs to 555 residues: DNA repair and recombination protein rhm52 (555 aa).

A DNA-binding region spans residues K148 to R152. Disordered regions lie at residues V197–D232 and H251–N555. Over residues N260 to N276 the composition is skewed to low complexity. Polar residues-rich tracts occupy residues S283 to N300 and T312 to H334. Composition is skewed to low complexity over residues N354–Q375 and N382–R404. Over residues D468–V478 the composition is skewed to polar residues. The segment covering Q479–Q490 has biased composition (low complexity). Over residues R491–D500 the composition is skewed to polar residues. The segment covering P536–G547 has biased composition (low complexity).

The protein belongs to the RAD52 family. In terms of assembly, part of a complex that includes RAD51, RAD52 and RAD59.

The protein resides in the nucleus. Its function is as follows. Involved in DNA double-strand break (DSB) repair and recombination. Promotes the annealing of complementary single-stranded DNA and by stimulation of the RAD51 recombinase. The sequence is that of DNA repair and recombination protein rhm52 (RHM52) from Pyricularia oryzae (strain 70-15 / ATCC MYA-4617 / FGSC 8958) (Rice blast fungus).